The primary structure comprises 227 residues: Cytochrome c oxidase subunit 2 (227 aa).

Topologically, residues 1 to 14 (MAYPLQLGLQDASS) are mitochondrial intermembrane. The chain crosses the membrane as a helical span at residues 15 to 45 (PIMEELMNFHDHTLMIVFLISSLVLYLISLM). Residues 46–59 (LTTKLIHTSTMDAQ) are Mitochondrial matrix-facing. The chain crosses the membrane as a helical span at residues 60–87 (EVETVWTILPAIILILIALPSLRILYMM). Residues 88–227 (DEINNPVLTV…LFENWSLSLT (140 aa)) lie on the Mitochondrial intermembrane side of the membrane. Cu cation contacts are provided by His-161, Cys-196, Glu-198, Cys-200, His-204, and Met-207. Mg(2+) is bound at residue Glu-198.

This sequence belongs to the cytochrome c oxidase subunit 2 family. As to quaternary structure, component of the cytochrome c oxidase (complex IV, CIV), a multisubunit enzyme composed of 14 subunits. The complex is composed of a catalytic core of 3 subunits MT-CO1, MT-CO2 and MT-CO3, encoded in the mitochondrial DNA, and 11 supernumerary subunits COX4I, COX5A, COX5B, COX6A, COX6B, COX6C, COX7A, COX7B, COX7C, COX8 and NDUFA4, which are encoded in the nuclear genome. The complex exists as a monomer or a dimer and forms supercomplexes (SCs) in the inner mitochondrial membrane with NADH-ubiquinone oxidoreductase (complex I, CI) and ubiquinol-cytochrome c oxidoreductase (cytochrome b-c1 complex, complex III, CIII), resulting in different assemblies (supercomplex SCI(1)III(2)IV(1) and megacomplex MCI(2)III(2)IV(2)). Found in a complex with TMEM177, COA6, COX18, COX20, SCO1 and SCO2. Interacts with TMEM177 in a COX20-dependent manner. Interacts with COX20. Interacts with COX16. Cu cation serves as cofactor.

The protein localises to the mitochondrion inner membrane. It catalyses the reaction 4 Fe(II)-[cytochrome c] + O2 + 8 H(+)(in) = 4 Fe(III)-[cytochrome c] + 2 H2O + 4 H(+)(out). Its function is as follows. Component of the cytochrome c oxidase, the last enzyme in the mitochondrial electron transport chain which drives oxidative phosphorylation. The respiratory chain contains 3 multisubunit complexes succinate dehydrogenase (complex II, CII), ubiquinol-cytochrome c oxidoreductase (cytochrome b-c1 complex, complex III, CIII) and cytochrome c oxidase (complex IV, CIV), that cooperate to transfer electrons derived from NADH and succinate to molecular oxygen, creating an electrochemical gradient over the inner membrane that drives transmembrane transport and the ATP synthase. Cytochrome c oxidase is the component of the respiratory chain that catalyzes the reduction of oxygen to water. Electrons originating from reduced cytochrome c in the intermembrane space (IMS) are transferred via the dinuclear copper A center (CU(A)) of subunit 2 and heme A of subunit 1 to the active site in subunit 1, a binuclear center (BNC) formed by heme A3 and copper B (CU(B)). The BNC reduces molecular oxygen to 2 water molecules using 4 electrons from cytochrome c in the IMS and 4 protons from the mitochondrial matrix. This is Cytochrome c oxidase subunit 2 (MT-CO2) from Taterillus emini (Emin's gerbil).